We begin with the raw amino-acid sequence, 103 residues long: Cycloviolacin-O9 (103 aa).

Residues 1–9 form the signal peptide; that stretch reads AAFALPAFA. A propeptide spanning residues 10 to 69 is cleaved from the precursor; the sequence is SFEKDVITPAALEAVLNRKAPLYNIMMENDAILNVIANVKTVISNPVLEEALLKTNHGVN. Residues 70–99 constitute a cross-link (cyclopeptide (Gly-Asn)); the sequence is GIPCGESCVWIPCLTSAVGCSCKSKVCYRN. 3 disulfides stabilise this stretch: Cys-73-Cys-89, Cys-77-Cys-91, and Cys-82-Cys-96. A propeptide spanning residues 100–103 is cleaved from the precursor; that stretch reads SLDN.

Post-translationally, this is a cyclic peptide.

Its function is as follows. Probably participates in a plant defense mechanism. The sequence is that of Cycloviolacin-O9 from Viola biflora (Yellow wood violet).